Here is a 414-residue protein sequence, read N- to C-terminus: Signal recognition particle receptor FtsY (414 aa).

Residues 216 to 223, 298 to 302, and 362 to 365 contribute to the GTP site; these read GVNGVGKT, DTAGR, and TKLD.

This sequence belongs to the GTP-binding SRP family. FtsY subfamily. In terms of assembly, part of the signal recognition particle protein translocation system, which is composed of SRP and FtsY. SRP is a ribonucleoprotein composed of Ffh and a 4.5S RNA molecule.

It is found in the cell inner membrane. It localises to the cytoplasm. It catalyses the reaction GTP + H2O = GDP + phosphate + H(+). In terms of biological role, involved in targeting and insertion of nascent membrane proteins into the cytoplasmic membrane. Acts as a receptor for the complex formed by the signal recognition particle (SRP) and the ribosome-nascent chain (RNC). Interaction with SRP-RNC leads to the transfer of the RNC complex to the Sec translocase for insertion into the membrane, the hydrolysis of GTP by both Ffh and FtsY, and the dissociation of the SRP-FtsY complex into the individual components. The protein is Signal recognition particle receptor FtsY of Haemophilus influenzae (strain ATCC 51907 / DSM 11121 / KW20 / Rd).